The chain runs to 946 residues: MKPLSSPLQQYWQTVVERLPEPLAEESLSAQAKSVLTFSDFVQDSVIAHPEWLTELESQPPQADEWQHYAAWLQEALCNVSDEAGLMRELRLFRRRIMVRIAWAQTLALVTEESILQQLSYLAETLIVAARDWLYDACCREWGTPCNAQGEAQPLLILGMGKLGGGELNFSSDIDLIFAWPEHGCTQGGRRELDNAQFFTRMGQRLIKVLDQPTQDGFVYRVDMRLRPFGESGPLVLSFAALEDYYQEQGRDWERYAMVKARIMGDSEGVYANELRAMLRPFVFRRYIDFSVIQSLRNMKGMIAREVRRRGLTDNIKLGAGGIREIEFIVQVFQLIRGGREPSLQSRSLLPTLSVIAALHLLSENDAEQLRVAYLFLRRLENLLQSINDEQTQTLPSDELNRARLAWAMDFADWPQLTGALTAHMTNVRRVFNELIGDDESETQEESLSEQWRELWQDALQEDDTTPVLAHLSEDDRKQVLTLIADFRKELDKRTIGPRGRQVLDHLMPHLLSDVCAREDAAVTLSRITALLVGIVTRTTYLELLSEFPAALKHLISLCAASPMIASQLARYPLLLDELLDPNTLYQPTATDAYRDELRQYLLRVPEDDEEQQLEALRQFKQAQLLRIAAADIAGTLPVMKVSDHLTWLAEAMIDAVVQQAWVQMVARYGKPNHLNEREGRGFAVVGYGKLGGWELGYSSDLDLIFLHDCPMDAMTDGEREIDGRQFYLRLAQRIMHLFSTRTSSGILYEVDARLRPSGAAGMLVTSAEAFADYQKNEAWTWEHQALVRARVVYGDPQLTAHFDAVRREIMTLPREGKTLQTEVREMREKMRAHLGNKHRDRFDIKADEGGITDIEFITQYLVLRYAHEKPKLTRWSDNVRILELLAQNDIMEEQEAMALTRAYTTLRDELHHLALQELPGHVSEDCFTAERELVRASWQKWLVEE.

An adenylyl removase region spans residues 1 to 440; the sequence is MKPLSSPLQQ…VFNELIGDDE (440 aa). The segment at 449-946 is adenylyl transferase; that stretch reads SEQWRELWQD…ASWQKWLVEE (498 aa).

Belongs to the GlnE family. Mg(2+) serves as cofactor.

It catalyses the reaction [glutamine synthetase]-O(4)-(5'-adenylyl)-L-tyrosine + phosphate = [glutamine synthetase]-L-tyrosine + ADP. The catalysed reaction is [glutamine synthetase]-L-tyrosine + ATP = [glutamine synthetase]-O(4)-(5'-adenylyl)-L-tyrosine + diphosphate. In terms of biological role, involved in the regulation of glutamine synthetase GlnA, a key enzyme in the process to assimilate ammonia. When cellular nitrogen levels are high, the C-terminal adenylyl transferase (AT) inactivates GlnA by covalent transfer of an adenylyl group from ATP to specific tyrosine residue of GlnA, thus reducing its activity. Conversely, when nitrogen levels are low, the N-terminal adenylyl removase (AR) activates GlnA by removing the adenylyl group by phosphorolysis, increasing its activity. The regulatory region of GlnE binds the signal transduction protein PII (GlnB) which indicates the nitrogen status of the cell. The protein is Bifunctional glutamine synthetase adenylyltransferase/adenylyl-removing enzyme of Escherichia coli O9:H4 (strain HS).